The following is a 271-amino-acid chain: Aquaporin-11 (271 aa).

Over 1–14 the chain is Cytoplasmic; sequence MSALLGLPPEVQDT. The chain crosses the membrane as a helical span at residues 15 to 35; sequence CISLGLMLLVVLFMGLARVIA. Topologically, residues 36 to 41 are lumenal; the sequence is RQQLHR. The chain crosses the membrane as a helical span at residues 42–62; that stretch reads PMVHAFVLEFLATFQLCYCTH. Residues 63–76 lie on the Cytoplasmic side of the membrane; the sequence is ELQLLSEQDSGHPT. A helical membrane pass occupies residues 77–97; it reads WTLTLIYFFSLVHGLTLVGTA. Residues 98–166 are Lumenal-facing; the sequence is SNPCGVMMQM…NPINTDISKA (69 aa). Residues 99–101 carry the NPC motif; it reads NPC. A helical membrane pass occupies residues 167-187; that stretch reads IIIEAICSFIFHSALLHFQEV. Topologically, residues 188-194 are cytoplasmic; that stretch reads RTKLRIH. The chain crosses the membrane as a helical span at residues 195 to 215; it reads VLAALITFLAYAGGSLTGALF. Residues 216–218 carry the NPA motif; that stretch reads NPA. Residues 216 to 234 are Lumenal-facing; it reads NPALALSLHFPCFDESFYK. The chain crosses the membrane as a helical span at residues 235-255; it reads FFVVYWVAPSLGVLLMILMFS. Over 256 to 271 the chain is Cytoplasmic; that stretch reads FFLPWLHNNQLSNKKE.

The protein belongs to the MIP/aquaporin (TC 1.A.8) family. AQP11/AQP12 subfamily. As to quaternary structure, homodimer; disulfide-linked. Homotetramer. Can also form homomultimer. Post-translationally, not glycosylated. Expressed in retina specifically at retinal Mueller glial cells. Expressed in adult testis, in the elongated spermatids (ES) and in residual bodies inside Sertoli cells.

It is found in the endoplasmic reticulum membrane. Its subcellular location is the cytoplasmic vesicle membrane. The protein resides in the cell membrane. The enzyme catalyses H2O(in) = H2O(out). The catalysed reaction is glycerol(in) = glycerol(out). It catalyses the reaction H2O2(out) = H2O2(in). Its function is as follows. Channel protein that facilitates the transport of water, glycerol and hydrogen peroxide across membrane of cell or organelles guaranteeing intracellular homeostasis in several organes like liver, kidney and brain. In situation of stress, participates in endoplasmic reticulum (ER) homeostasis by regulating redox homeostasis through the transport of hydrogen peroxide across the endoplasmic reticulum membrane thereby regulating the oxidative stress through the NADPH oxidase 2 pathway. Plays a role by maintaining an environment suitable for translation or protein foldings in the ER lumen namely by participating in the PKD1 glycosylation processing resulting in regulation of PKD1 membrane trafficking thereby preventing the accumulation of unfolding protein in ER. Plays a role in the proximal tubule function by regulating its endosomal acidification. May play a role in postnatal kidney development. The chain is Aquaporin-11 from Rattus norvegicus (Rat).